Consider the following 131-residue polypeptide: Small ribosomal subunit protein uS11 (131 aa).

It belongs to the universal ribosomal protein uS11 family. In terms of assembly, part of the 30S ribosomal subunit. Interacts with proteins S7 and S18. Binds to IF-3.

Functionally, located on the platform of the 30S subunit, it bridges several disparate RNA helices of the 16S rRNA. Forms part of the Shine-Dalgarno cleft in the 70S ribosome. The polypeptide is Small ribosomal subunit protein uS11 (Clostridium novyi (strain NT)).